A 1171-amino-acid chain; its full sequence is Pesticidal crystal protein Cry1Ea (1171 aa).

The interval 1094–1124 is disordered; it reads ESNSSVHASVYEEKSYTDRRRENPCESNRGY. A compositionally biased stretch (basic and acidic residues) spans 1103 to 1117; that stretch reads VYEEKSYTDRRRENP.

The protein belongs to the delta endotoxin family.

Promotes colloidosmotic lysis by binding to the midgut epithelial cells of many lepidopteran larvae including Spodoptera species. The polypeptide is Pesticidal crystal protein Cry1Ea (cry1Ea) (Bacillus thuringiensis subsp. kenyae).